The following is a 370-amino-acid chain: Uroporphyrinogen decarboxylase (370 aa).

Substrate contacts are provided by residues 29-33 (RQAGR), D79, Y155, S210, and H342.

It belongs to the uroporphyrinogen decarboxylase family. In terms of assembly, homodimer.

It localises to the cytoplasm. The enzyme catalyses uroporphyrinogen III + 4 H(+) = coproporphyrinogen III + 4 CO2. The protein operates within porphyrin-containing compound metabolism; protoporphyrin-IX biosynthesis; coproporphyrinogen-III from 5-aminolevulinate: step 4/4. In terms of biological role, catalyzes the decarboxylation of four acetate groups of uroporphyrinogen-III to yield coproporphyrinogen-III. The sequence is that of Uroporphyrinogen decarboxylase from Verminephrobacter eiseniae (strain EF01-2).